The sequence spans 681 residues: Kojibiose hydrolase (681 aa).

The N-terminal stretch at 1–23 (MKKYIFNHVFFFLMLCGSNYLYS) is a signal peptide. Beta-D-glucose-binding residues include arginine 74, tryptophan 343, aspartate 344, tryptophan 391, glutamate 392, threonine 407, glutamate 472, tryptophan 473, lysine 538, glutamine 539, and aspartate 573. The active-site Proton donor is the glutamate 472. Glutamate 616 functions as the Proton acceptor in the catalytic mechanism.

Belongs to the glycosyl hydrolase 65 family. Homohexamer; dimer of trimers.

Its subcellular location is the periplasm. It catalyses the reaction kojibiose + H2O = beta-D-glucose + D-glucose. Glycosidase that specifically hydrolyzes kojibiose to beta-glucose and glucose. Also hydrolyzes, with lower catalytic efficiency, longer kojioligosaccharides (from kojitriose to kojipentaose) and shorter oligosaccharides produced by the degradation of dextran-containing alpha-1,2 branches. Probably acts on alpha-(1-&gt;2)-glucosyl isomaltooligosaccharides. Shows weak activity with nigerose but has no activity toward p-nitrophenyl alpha-glucopyranoside, which is a general substrate of exo-acting alpha-glucoside hydrolases. Has a strict specificity for alpha-1,2-glucosidic linkages. Catalyzes the hydrolytic reaction via an anomer-inverting mechanism. The sequence is that of Kojibiose hydrolase from Flavobacterium johnsoniae (strain ATCC 17061 / DSM 2064 / JCM 8514 / BCRC 14874 / CCUG 350202 / NBRC 14942 / NCIMB 11054 / UW101) (Cytophaga johnsonae).